Consider the following 116-residue polypeptide: Large ribosomal subunit protein bL19 (116 aa).

The protein belongs to the bacterial ribosomal protein bL19 family.

In terms of biological role, this protein is located at the 30S-50S ribosomal subunit interface and may play a role in the structure and function of the aminoacyl-tRNA binding site. This is Large ribosomal subunit protein bL19 from Solidesulfovibrio magneticus (strain ATCC 700980 / DSM 13731 / RS-1) (Desulfovibrio magneticus).